A 513-amino-acid chain; its full sequence is Histidine ammonia-lyase (513 aa).

The 5-imidazolinone (Ala-Gly) cross-link spans 143–145; the sequence is ASG. Position 144 is a 2,3-didehydroalanine (Ser) (Ser144).

It belongs to the PAL/histidase family. Post-translationally, contains an active site 4-methylidene-imidazol-5-one (MIO), which is formed autocatalytically by cyclization and dehydration of residues Ala-Ser-Gly.

It is found in the cytoplasm. The catalysed reaction is L-histidine = trans-urocanate + NH4(+). Its pathway is amino-acid degradation; L-histidine degradation into L-glutamate; N-formimidoyl-L-glutamate from L-histidine: step 1/3. In Xanthomonas campestris pv. campestris (strain B100), this protein is Histidine ammonia-lyase.